We begin with the raw amino-acid sequence, 500 residues long: MEAARPPTTAGKFVVVGGGIAGVTCAEQLATHFPSEDILLVTASPVIKAVTNFKQISKILEEFDVEEQSSTMLEKRFPNIKVIESGVKQLKSEEHCIVTEDGNQHVYKKLCLCAGAKPKLICEGNPYVLGIRDTDSAQEFQKQLIKAKRIMIIGNGGIALELVYEIEGCEVIWAIKDKAIGNTFFDAGAAEFLTSKLIAEKSEAKIAHKRTRYTTEGRKKEARSKCKSDNVGSALGPDWHEGLNLKGTKEFSHKIHLETMCEVKKIYLQDEFRILKKKSFSFPRDHKSVTTDTEMWPVYVELTNEKIYGCDFIVSATGVTPNVEPFLHGNSFELGEDGGLKVDDHMHTSLPDVYAAGDICTTAWQLSPVWQQMRLWTQARQMGWYAAKCMAAASSGDSIDMDFSFELFAHVTKFFNYKVVLLGKYNAQGLGSDHELMLRCTKGQEYVKVVMQNGRMMGAVLIGETDLEETFENLILNQMNLSSYGEDLLDPNIDIEDYFD.

At methionine 1 the chain carries N-acetylmethionine.

It belongs to the class-I pyridine nucleotide-disulfide oxidoreductase family. PYROXD1 subfamily. FAD is required as a cofactor.

The protein localises to the nucleus. It is found in the cytoplasm. The protein resides in the myofibril. Its subcellular location is the sarcomere. Its function is as follows. Probable FAD-dependent oxidoreductase; involved in the cellular oxidative stress response. Required for normal sarcomere structure and muscle fiber integrity. The sequence is that of Pyridine nucleotide-disulfide oxidoreductase domain-containing protein 1 (PYROXD1) from Pongo abelii (Sumatran orangutan).